The chain runs to 306 residues: Oligopeptide transport system permease protein OppB (306 aa).

The Cytoplasmic portion of the chain corresponds to 1–12 (MLKFILRRCLEA). A helical transmembrane segment spans residues 13-30 (IPTLFILITISFFMMRLA). Residues 31 to 101 (PGSPFTGERA…ASFPVSAKLG (71 aa)) are Periplasmic-facing. One can recognise an ABC transmembrane type-1 domain in the interval 94-293 (FPVSAKLGAA…ALTILFNAIV (200 aa)). Residues 102–121 (AAAFLLAVIIGVSAGVIAAL) form a helical membrane-spanning segment. The Cytoplasmic segment spans residues 122–133 (KQNTRWDYTVMG). Residues 134 to 156 (FAMTGVVIPSFVVAPLLVMVFAI) form a helical membrane-spanning segment. The Periplasmic segment spans residues 157 to 165 (TLQWLPGGG). A helical membrane pass occupies residues 166–188 (WNGGALKFMILPMVALSLAYIAS). At 189 to 227 (IARITRGSMIEVLHSNFIRTARAKGLPMRRIIFRHALKP) the chain is on the cytoplasmic side. Residues 228-250 (ALLPVLSYMGPAFVGIITGSMVI) form a helical membrane-spanning segment. Topologically, residues 251–277 (ETIYGLPGIGQLFVNGALNRDYSLVLS) are periplasmic. A helical membrane pass occupies residues 278-300 (LTILVGALTILFNAIVDVLYAVI). Residues 301–306 (DPKIRY) are Cytoplasmic-facing.

The protein belongs to the binding-protein-dependent transport system permease family. OppBC subfamily. The complex is composed of two ATP-binding proteins (OppD and OppF), two transmembrane proteins (OppB and OppC) and a solute-binding protein (OppA).

It localises to the cell inner membrane. Its function is as follows. Part of the ABC transporter complex OppABCDF involved in the uptake of oligopeptides, including the cell wall murein tripeptide L-alanyl-gamma-D-glutamyl-meso-diaminopimelate. Responsible for the translocation of the substrate across the membrane. Plays an important nutritional role and is involved in the recycling of cell wall peptides. The sequence is that of Oligopeptide transport system permease protein OppB from Salmonella typhimurium (strain LT2 / SGSC1412 / ATCC 700720).